We begin with the raw amino-acid sequence, 423 residues long: Phaseolin (423 aa).

An N-terminal signal peptide occupies residues 1-21; that stretch reads RRVPLLLLGILFLASLSASFA. Asparagine 28 carries N-linked (GlcNAc...) asparagine glycosylation. Cupin type-1 domains lie at 35–193 and 228–383; these read FYFS…EKIN and KSLD…EDVQ. N-linked (GlcNAc...) asparagine glycans are attached at residues asparagine 243, asparagine 332, asparagine 390, and asparagine 396. Residues 397–423 are disordered; it reads GSYHKNAHPHEQEQQKQQKGRKGAFVY. Basic residues predominate over residues 414-423; the sequence is QKGRKGAFVY.

Belongs to the 7S seed storage protein family. In terms of assembly, homotrimer.

Its subcellular location is the vacuole. The protein localises to the aleurone grain. Its function is as follows. Major seed storage protein. This chain is Phaseolin (PHS), found in Phaseolus lunatus (Lima bean).